A 180-amino-acid polypeptide reads, in one-letter code: Bifunctional protein PyrR 1 (180 aa).

Substrate contacts are provided by residues 39 to 40 (TR), 103 to 111 (DDVLFTGRT), arginine 136, and valine 160. The PRPP-binding motif lies at 99–111 (VILVDDVLFTGRT).

This sequence belongs to the purine/pyrimidine phosphoribosyltransferase family. PyrR subfamily. Homodimer and homohexamer; in equilibrium.

The catalysed reaction is UMP + diphosphate = 5-phospho-alpha-D-ribose 1-diphosphate + uracil. In terms of biological role, regulates transcriptional attenuation of the pyrimidine nucleotide (pyr) operon by binding in a uridine-dependent manner to specific sites on pyr mRNA. This disrupts an antiterminator hairpin in the RNA and favors formation of a downstream transcription terminator, leading to a reduced expression of downstream genes. Functionally, also displays a weak uracil phosphoribosyltransferase activity which is not physiologically significant. This Lactiplantibacillus plantarum (strain ATCC BAA-793 / NCIMB 8826 / WCFS1) (Lactobacillus plantarum) protein is Bifunctional protein PyrR 1 (pyrR1).